A 482-amino-acid polypeptide reads, in one-letter code: Tektin (482 aa).

Coiled coils occupy residues 100 to 129, 171 to 204, 282 to 324, 376 to 407, and 441 to 478; these read CLAE…QAKI, ARAV…ALRV, RLNE…ALTS, VKVA…DALR, and RTQT…TMGG. Residues 311-330 are disordered; it reads EQARAKGQRSALTSALDDKR. Arg-462 bears the Asymmetric dimethylarginine mark.

It belongs to the tektin family. In terms of processing, asymmetrically dimethylated at Arg-462 during flagellum resorption. Probably methylated by PRMT1.

It localises to the cytoplasm. The protein localises to the cytoskeleton. It is found in the flagellum axoneme. The protein resides in the flagellum basal body. Structural component of ciliary and flagellar microtubules. Plays a key role in the assembly or attachment of the inner dynein arm to microtubules in flagella and cilia. Forms filamentous polymers in the walls of ciliary and flagellar microtubules. The chain is Tektin from Chlamydomonas reinhardtii (Chlamydomonas smithii).